Here is a 292-residue protein sequence, read N- to C-terminus: 4-hydroxy-tetrahydrodipicolinate synthase (292 aa).

Thr-45 contributes to the pyruvate binding site. Tyr-133 functions as the Proton donor/acceptor in the catalytic mechanism. Lys-161 acts as the Schiff-base intermediate with substrate in catalysis. Ile-203 contacts pyruvate.

The protein belongs to the DapA family. Homodimer.

The protein localises to the cytoplasm. It catalyses the reaction L-aspartate 4-semialdehyde + pyruvate = (2S,4S)-4-hydroxy-2,3,4,5-tetrahydrodipicolinate + H2O + H(+). It participates in amino-acid biosynthesis; L-lysine biosynthesis via DAP pathway; (S)-tetrahydrodipicolinate from L-aspartate: step 3/4. Its function is as follows. Catalyzes the condensation of (S)-aspartate-beta-semialdehyde [(S)-ASA] and pyruvate to 4-hydroxy-tetrahydrodipicolinate (HTPA). The protein is 4-hydroxy-tetrahydrodipicolinate synthase of Pseudomonas savastanoi pv. phaseolicola (strain 1448A / Race 6) (Pseudomonas syringae pv. phaseolicola (strain 1448A / Race 6)).